A 619-amino-acid chain; its full sequence is Guanylate cyclase soluble subunit beta-1 (619 aa).

His105 lines the heme pocket. Residues 421–554 form the Guanylate cyclase domain; the sequence is TILFSGIVGF…NTVNLTSRTE (134 aa).

This sequence belongs to the adenylyl cyclase class-4/guanylyl cyclase family. In terms of assembly, the active enzyme is formed by a heterodimer of an alpha and a beta subunit. Heterodimer with GUCY1A1. Can also form inactive homodimers in vitro. Requires heme as cofactor. In terms of tissue distribution, lung and brain.

It is found in the cytoplasm. It carries out the reaction GTP = 3',5'-cyclic GMP + diphosphate. Its activity is regulated as follows. Activated by nitric oxide in the presence of magnesium or manganese ions, binding of NO to the heme iron increases catalytic activity up to 400 folds. Functionally, mediates responses to nitric oxide (NO) by catalyzing the biosynthesis of the signaling molecule cGMP. The protein is Guanylate cyclase soluble subunit beta-1 (GUCY1B1) of Bos taurus (Bovine).